The following is a 404-amino-acid chain: Magnesium transporter NIPA4 (404 aa).

The Extracellular segment spans residues 1–55 (MELRVSNTSCENGSLLHLYCSSQEVLCQIVNDLSPEVPSNATFHSWQERIRQNYG). Residues asparagine 7, asparagine 12, and asparagine 40 are each glycosylated (N-linked (GlcNAc...) asparagine). The chain crosses the membrane as a helical span at residues 56-76 (FYIGLGLAFLSSFLIGSSVIL). Residues 77-102 (KKKGLLRLVATGATRAVDGGFGYLKD) are Cytoplasmic-facing. Residues 103–123 (AMWWAGFLTMAAGEVANFGAY) form a helical membrane-spanning segment. Position 124 (alanine 124) is a topological domain, extracellular. The helical transmembrane segment at 125–145 (FAPATVVTPLGALSVLISAIL) threads the bilayer. Residues 146 to 153 (SSYFLRES) lie on the Cytoplasmic side of the membrane. The chain crosses the membrane as a helical span at residues 154 to 174 (LNLLGKLGCVICVAGSTVMVI). Residues 175–195 (HAPEEEKVTTIMEMASKMKDT) are Extracellular-facing. The helical transmembrane segment at 196–216 (GFIVFAVLLLVSCLILIFVIA) threads the bilayer. The Cytoplasmic portion of the chain corresponds to 217 to 223 (PRYGQRN). A helical membrane pass occupies residues 224–244 (ILIYIIICSVIGAFSVAAVKG). Residues 245 to 261 (LGITIKNFFQGLPVVRH) lie on the Extracellular side of the membrane. Residues 262-282 (PLPYILSLILALSLSTQVNFL) form a helical membrane-spanning segment. Residues 283-293 (NRALDIFNTSL) are Cytoplasmic-facing. A helical membrane pass occupies residues 294-314 (VFPIYYVFFTTVVVTSSIILF). Residues 315 to 324 (KEWYSMSAVD) are Extracellular-facing. A helical membrane pass occupies residues 325 to 345 (IAGTLSGFVTIILGVFMLHAF). Topologically, residues 346-404 (KDLDISCASLPHMHKNPPPSPAPEPTVIRLEDKNVLVDNIELASTSSPEEKPKVFIIHS) are cytoplasmic.

Belongs to the NIPA family. In terms of tissue distribution, highly expressed in brain, lung, stomach, keratinocytes and leukocytes, and in all other tissues tested except liver, thyroid and fetal brain.

The protein resides in the cell membrane. The catalysed reaction is Mg(2+)(in) = Mg(2+)(out). Its function is as follows. Acts as a Mg(2+) transporter. Can also transport other divalent cations such as Ba(2+), Sr(2+) and Fe(2+) but to a much less extent than Mg(2+). May be a receptor for ligands (trioxilins A3 and B3) from the hepoxilin pathway. The polypeptide is Magnesium transporter NIPA4 (NIPAL4) (Homo sapiens (Human)).